We begin with the raw amino-acid sequence, 276 residues long: Large ribosomal subunit protein uL2c (276 aa).

Positions 225 to 276 are disordered; it reads AMNPVDHPHGGGEGRTPIGRKKPVTPWGYSALGKKSRKRNRYSDASILRRRE.

It belongs to the universal ribosomal protein uL2 family. In terms of assembly, part of the 50S ribosomal subunit.

It is found in the plastid. Its subcellular location is the chloroplast. This chain is Large ribosomal subunit protein uL2c (rpl2), found in Pinus thunbergii (Japanese black pine).